Here is a 340-residue protein sequence, read N- to C-terminus: Fructose import permease protein FruG (340 aa).

A run of 9 helical transmembrane segments spans residues 23–43 (IPTLAAVVIFILMIIMGQALF), 49–69 (LGFISSLFIDHAYLIILAVAM), 73–93 (ILTGGIDLSVGAIVAITAVVG), 101–121 (VPAFLVMIIMLLIGAVFGLLA), 130–150 (MQPFIATLSTMFLARGLASII), 182–202 (LSFNVGVIIALVVVVFGYVFL), 234–254 (IIYLTSATLAALASIVYTANI), 273–293 (VVIGGTIITGGFGYVLGSVLG), and 307–327 (FGVPAEWTTIVIGLMILVFVV).

Belongs to the binding-protein-dependent transport system permease family. The complex is composed of an ATP-binding protein (FruK), two transmembrane proteins (FruF and FruG) and a solute-binding protein (FruE).

The protein localises to the cell membrane. Its function is as follows. Part of the high-affinity ABC transporter complex FruEKFG involved in fructose uptake. Can also transport ribose and xylose, with lower affinity. Probably responsible for the translocation of the substrate across the membrane. This Bifidobacterium longum (strain NCC 2705) protein is Fructose import permease protein FruG.